Reading from the N-terminus, the 648-residue chain is Probable alpha-galactosidase D (648 aa).

Positions 1-17 are cleaved as a signal peptide; that stretch reads MESIVWLLLLSPALVAG. 2 N-linked (GlcNAc...) asparagine glycosylation sites follow: Asn84 and Asn90. An intrachain disulfide couples Cys123 to Cys156. The active-site Nucleophile is Asp154. 199-203 lines the substrate pocket; it reads EWGID. The active-site Proton donor is Asp221. Asn339, Asn505, and Asn572 each carry an N-linked (GlcNAc...) asparagine glycan.

It belongs to the glycosyl hydrolase 27 family.

It localises to the secreted. It catalyses the reaction Hydrolysis of terminal, non-reducing alpha-D-galactose residues in alpha-D-galactosides, including galactose oligosaccharides, galactomannans and galactolipids.. Functionally, hydrolyzes a variety of simple alpha-D-galactoside as well as more complex molecules such as oligosaccharides and polysaccharides. The polypeptide is Probable alpha-galactosidase D (aglD) (Neosartorya fischeri (strain ATCC 1020 / DSM 3700 / CBS 544.65 / FGSC A1164 / JCM 1740 / NRRL 181 / WB 181) (Aspergillus fischerianus)).